We begin with the raw amino-acid sequence, 79 residues long: Cytochrome b (79 aa).

Helical transmembrane passes span 1–7 (TALLLAA), 31–52 (WLIR…YLHI), and 67–79 (WNIG…TLMA). Heme b is bound by residues H37 and H51.

This sequence belongs to the cytochrome b family. The cytochrome bc1 complex contains 11 subunits: 3 respiratory subunits (MT-CYB, CYC1 and UQCRFS1), 2 core proteins (UQCRC1 and UQCRC2) and 6 low-molecular weight proteins (UQCRH/QCR6, UQCRB/QCR7, UQCRQ/QCR8, UQCR10/QCR9, UQCR11/QCR10 and a cleavage product of UQCRFS1). This cytochrome bc1 complex then forms a dimer. It depends on heme b as a cofactor.

Its subcellular location is the mitochondrion inner membrane. Functionally, component of the ubiquinol-cytochrome c reductase complex (complex III or cytochrome b-c1 complex) that is part of the mitochondrial respiratory chain. The b-c1 complex mediates electron transfer from ubiquinol to cytochrome c. Contributes to the generation of a proton gradient across the mitochondrial membrane that is then used for ATP synthesis. This chain is Cytochrome b (MT-CYB), found in Pomatostomus superciliosus (White-browed babbler).